We begin with the raw amino-acid sequence, 498 residues long: Glycerol kinase (498 aa).

ADP is bound at residue threonine 14. 3 residues coordinate ATP: threonine 14, threonine 15, and serine 16. Threonine 14 lines the sn-glycerol 3-phosphate pocket. Residue arginine 18 participates in ADP binding. Sn-glycerol 3-phosphate is bound by residues arginine 84, glutamate 85, tyrosine 136, and aspartate 243. Residues arginine 84, glutamate 85, tyrosine 136, aspartate 243, and glutamine 244 each coordinate glycerol. ADP contacts are provided by threonine 265 and glycine 308. Positions 265, 308, 312, and 409 each coordinate ATP. ADP is bound by residues glycine 409 and asparagine 413.

The protein belongs to the FGGY kinase family.

The catalysed reaction is glycerol + ATP = sn-glycerol 3-phosphate + ADP + H(+). The protein operates within polyol metabolism; glycerol degradation via glycerol kinase pathway; sn-glycerol 3-phosphate from glycerol: step 1/1. With respect to regulation, inhibited by fructose 1,6-bisphosphate (FBP). Key enzyme in the regulation of glycerol uptake and metabolism. Catalyzes the phosphorylation of glycerol to yield sn-glycerol 3-phosphate. This chain is Glycerol kinase, found in Shewanella frigidimarina (strain NCIMB 400).